A 269-amino-acid polypeptide reads, in one-letter code: uncharacterized protein (269 aa).

One can recognise an HTH gntR-type domain in the interval 5-73; that stretch reads APKWRELADR…RGHGTVVRRK (69 aa). The segment at residues 33 to 52 is a DNA-binding region (H-T-H motif); it reads IRDLVEAGEGSKETVHRAYK.

In terms of biological role, the imp locus inhibits the extrachromosomal maintenance of the Streptomyces plasmid SLP1. This is an uncharacterized protein from Streptomyces coelicolor (strain ATCC BAA-471 / A3(2) / M145).